Here is a 594-residue protein sequence, read N- to C-terminus: Class I diterpene synthase TPS6, chloroplastic (594 aa).

Mg(2+)-binding residues include D330, D334, N474, Q477, and E482. A DDXXD motif motif is present at residues 330 to 334; it reads DDFFD.

This sequence belongs to the terpene synthase family. Mg(2+) serves as cofactor. In terms of tissue distribution, mostly expressed in trichomes of leaves and fruits.

The protein resides in the plastid. Its subcellular location is the chloroplast. It carries out the reaction peregrinol diphosphate = labd-13(16),14-diene-9-ol + diphosphate. It catalyses the reaction 9alpha-copalyl diphosphate = syn-isopimara-7,15-diene + diphosphate. The protein operates within secondary metabolite biosynthesis; terpenoid biosynthesis. In terms of biological role, involved in the biosynthesis of labdane-type diterpenoid including cleroda-dienols, and peregrinol lactones and furan derivatives, dopaminergic diterpenoids that can bind to dopamine receptors in the human pituitary gland, have probably ability to lower prolactin levels, and are used to treat menstrual cycle disorders (e.g. premenstrual syndrome and mastodynia). Terpene synthase the catalyzes the conversion of peregrinol diphosphate to labda-13(16),14-dien-9-ol, and of syn-copalyl diphosophate to dehydroabietadiene and syn-isopimara-7,15-diene. This is Class I diterpene synthase TPS6, chloroplastic from Vitex agnus-castus (Chaste tree).